The primary structure comprises 95 residues: Large ribosomal subunit protein bL27 (95 aa).

Positions 1 to 8 (MEMNLQFF) are excised as a propeptide. Residues 1–34 (MEMNLQFFSHHKGGGSTSNGRDSAGRRLGTKRAD) form a disordered region.

It belongs to the bacterial ribosomal protein bL27 family. In terms of processing, the N-terminus is cleaved by ribosomal processing cysteine protease Prp.

The chain is Large ribosomal subunit protein bL27 from Pediococcus pentosaceus (strain ATCC 25745 / CCUG 21536 / LMG 10740 / 183-1w).